We begin with the raw amino-acid sequence, 113 residues long: MRHYEIIFMIHPDYSEKVSVIIEKYKKIIHHNSGIIHRLEDWGRRQLAYPINKLHKAHYILLNIETFPKTISLLETDFRFNNAVIRNIIISVKKAINEPSPVIKLKEEKKDKK.

This sequence belongs to the bacterial ribosomal protein bS6 family.

In terms of biological role, binds together with bS18 to 16S ribosomal RNA. This chain is Small ribosomal subunit protein bS6, found in Buchnera aphidicola subsp. Schizaphis graminum (strain Sg).